A 723-amino-acid polypeptide reads, in one-letter code: PX domain-containing protein EREL1 (723 aa).

Basic residues predominate over residues 1-12 (MMQRRSPPKHRH). Residues 1–26 (MMQRRSPPKHRHDGTSPLPLGMDWSP) form a disordered region. Residues 48–165 (YCVTIPSWIV…SFLELEAAAR (118 aa)) enclose the PX domain. 2 disordered regions span residues 169 to 193 (QDVDQNASDSNNDRSSTSSSPMVHP) and 209 to 230 (YGSDTAYETSEVGSPSVGQDDI). Low complexity predominate over residues 172–193 (DQNASDSNNDRSSTSSSPMVHP). Polar residues predominate over residues 209–225 (YGSDTAYETSEVGSPSV). 2 coiled-coil regions span residues 401–474 (NERL…LRQK) and 503–555 (KHVL…LEKE). Residues 698–723 (DVKTTEDVNEENSDEKDEASRETLKR) form a disordered region. Acidic residues predominate over residues 704 to 714 (DVNEENSDEKD).

It localises to the cytoplasm. It is found in the cytosol. The protein localises to the endosome membrane. In terms of biological role, acts as an effector of RABF2A and RABF2B. Involved in vacuolar transport of storage proteins. Regulates membrane trafficking to protein storage vacuoles (PSVs). Binds specifically to phosphatidylinositol 3-monophosphate (PtdIns3P). This is PX domain-containing protein EREL1 from Arabidopsis thaliana (Mouse-ear cress).